Consider the following 44-residue polypeptide: Cytochrome b559 subunit beta (44 aa).

A helical transmembrane segment spans residues 19 to 35 (WLSVHALAVPTVFFIGA). Histidine 23 serves as a coordination point for heme.

It belongs to the PsbE/PsbF family. As to quaternary structure, heterodimer of an alpha subunit and a beta subunit. PSII is composed of 1 copy each of membrane proteins PsbA, PsbB, PsbC, PsbD, PsbE, PsbF, PsbH, PsbI, PsbJ, PsbK, PsbL, PsbM, PsbT, PsbX, PsbY, PsbZ, Psb30/Ycf12, peripheral proteins PsbO, CyanoQ (PsbQ), PsbU, PsbV and a large number of cofactors. It forms dimeric complexes. The cofactor is heme b.

It is found in the cellular thylakoid membrane. This b-type cytochrome is tightly associated with the reaction center of photosystem II (PSII). PSII is a light-driven water:plastoquinone oxidoreductase that uses light energy to abstract electrons from H(2)O, generating O(2) and a proton gradient subsequently used for ATP formation. It consists of a core antenna complex that captures photons, and an electron transfer chain that converts photonic excitation into a charge separation. In Rippkaea orientalis (strain PCC 8801 / RF-1) (Cyanothece sp. (strain PCC 8801)), this protein is Cytochrome b559 subunit beta.